Here is an 81-residue protein sequence, read N- to C-terminus: MKASMFLALAGLVLLFVVCYASESEEKEFPRELLSTIFAVDDFKGEERECLGIFKACTPGKNECCSNRVCSGKTRWSKWKL.

Positions 1-21 (MKASMFLALAGLVLLFVVCYA) are cleaved as a signal peptide. Residues 22–48 (SESEEKEFPRELLSTIFAVDDFKGEER) constitute a propeptide that is removed on maturation. Disulfide bonds link C50-C65 and C57-C70.

The protein belongs to the neurotoxin 10 (Hwtx-1) family. 51 (Hntx-8) subfamily. In terms of tissue distribution, expressed by the venom gland.

The protein resides in the secreted. Binds to the nicotinic acetylcholine receptor. Blocks neuromuscular transmission. The sequence is that of U6-theraphotoxin-Hs1a from Cyriopagopus schmidti (Chinese bird spider).